Consider the following 284-residue polypeptide: Pantothenate synthetase (284 aa).

ATP is bound at residue 30–37; that stretch reads MGNLHQGH. Residue His-37 is the Proton donor of the active site. Residue Gln-61 participates in (R)-pantoate binding. Gln-61 contacts beta-alanine. 149 to 152 serves as a coordination point for ATP; that stretch reads GQKD. A (R)-pantoate-binding site is contributed by Gln-155. ATP contacts are provided by residues Val-178 and 186–189; that span reads LSSR.

The protein belongs to the pantothenate synthetase family. Homodimer.

It is found in the cytoplasm. It catalyses the reaction (R)-pantoate + beta-alanine + ATP = (R)-pantothenate + AMP + diphosphate + H(+). It participates in cofactor biosynthesis; (R)-pantothenate biosynthesis; (R)-pantothenate from (R)-pantoate and beta-alanine: step 1/1. Functionally, catalyzes the condensation of pantoate with beta-alanine in an ATP-dependent reaction via a pantoyl-adenylate intermediate. In Aeromonas salmonicida (strain A449), this protein is Pantothenate synthetase.